The chain runs to 304 residues: Acetyl-coenzyme A carboxylase carboxyl transferase subunit beta (304 aa).

The region spanning 29-298 (LWSKCESCGA…ASDVSPAAVP (270 aa)) is the CoA carboxyltransferase N-terminal domain. Positions 33, 36, 52, and 55 each coordinate Zn(2+). The C4-type zinc finger occupies 33-55 (CESCGALTYTKDLRANQMVCLEC).

Belongs to the AccD/PCCB family. Acetyl-CoA carboxylase is a heterohexamer composed of biotin carboxyl carrier protein (AccB), biotin carboxylase (AccC) and two subunits each of ACCase subunit alpha (AccA) and ACCase subunit beta (AccD). Requires Zn(2+) as cofactor.

It localises to the cytoplasm. It carries out the reaction N(6)-carboxybiotinyl-L-lysyl-[protein] + acetyl-CoA = N(6)-biotinyl-L-lysyl-[protein] + malonyl-CoA. It functions in the pathway lipid metabolism; malonyl-CoA biosynthesis; malonyl-CoA from acetyl-CoA: step 1/1. In terms of biological role, component of the acetyl coenzyme A carboxylase (ACC) complex. Biotin carboxylase (BC) catalyzes the carboxylation of biotin on its carrier protein (BCCP) and then the CO(2) group is transferred by the transcarboxylase to acetyl-CoA to form malonyl-CoA. In Acaryochloris marina (strain MBIC 11017), this protein is Acetyl-coenzyme A carboxylase carboxyl transferase subunit beta.